Reading from the N-terminus, the 375-residue chain is Adiponectin receptor protein 1 (375 aa).

Positions 1-60 (MSSHKGSVVAQGNGAPASNREADTVELAELGPLLEEKGKRVIANPPKAEEEQTCPVPQEE) are disordered. Topologically, residues 1 to 136 (MSSHKGSVVA…SIFRIHTETG (136 aa)) are cytoplasmic. The helical transmembrane segment at 137–157 (NIWTHLLGFVLFLFLGILTML) threads the bilayer. Topologically, residues 158-170 (RPNMYFMAPLQEK) are extracellular. Residues 171–191 (VVFGMFFLGAVLCLSFSWLFH) traverse the membrane as a helical segment. A Zn(2+)-binding site is contributed by His191. Over 192–203 (TVYCHSEKVSRT) the chain is Cytoplasmic. A helical membrane pass occupies residues 204–224 (FSKLDYSGIALLIMGSFVPWL). The Extracellular segment spans residues 225–234 (YYSFYCSPQP). A helical transmembrane segment spans residues 235–255 (RLIYLSIVCVLGISAIIVAQW). The Cytoplasmic portion of the chain corresponds to 256–264 (DRFATPKHR). A helical transmembrane segment spans residues 265–285 (QTRAGVFLGLGLSGVVPTMHF). The Extracellular portion of the chain corresponds to 286 to 298 (TIAEGFVKATTVG). A helical transmembrane segment spans residues 299-319 (QMGWFFLMAVMYITGAGLYAA). Residues 320-337 (RIPERFFPGKFDIWFQSH) lie on the Cytoplasmic side of the membrane. Residues His337 and His341 each coordinate Zn(2+). The helical transmembrane segment at 338–358 (QIFHVLVVAAAFVHFYGVSNL) threads the bilayer. Residues 359 to 375 (QEFRYGLEGGCTDDTLL) lie on the Extracellular side of the membrane.

The protein belongs to the ADIPOR family. As to quaternary structure, may form homooligomers and heterooligomers with ADIPOR2. Interacts with APPL2 (via BAR domain); hinders the accessibility of APPL1 to ADIPOR1; negatively regulates adiponectin signaling; ADIPOQ dissociates this interaction and facilitates the recruitment of APPL1 to ADIPOR1. Interacts with APPL1; ADIPOQ enhances this interaction; inhibites adiponectin-stimulated binding of APPL2 to ADIPOR1. In terms of tissue distribution, widely expressed. Highly expressed in heart and skeletal muscle. Expressed at intermediate level in brain, spleen, kidney, liver, placenta, lung and peripheral blood leukocytes. Weakly expressed in colon, thymus and small intestine.

Its subcellular location is the cell membrane. In terms of biological role, receptor for ADIPOQ, an essential hormone secreted by adipocytes that regulates glucose and lipid metabolism. Required for normal glucose and fat homeostasis and for maintaining a normal body weight. ADIPOQ-binding activates a signaling cascade that leads to increased AMPK activity, and ultimately to increased fatty acid oxidation, increased glucose uptake and decreased gluconeogenesis. Has high affinity for globular adiponectin and low affinity for full-length adiponectin. The polypeptide is Adiponectin receptor protein 1 (Homo sapiens (Human)).